Here is a 1185-residue protein sequence, read N- to C-terminus: Ubiquitin carboxyl-terminal hydrolase 36 (1185 aa).

Residues 126 to 169 are compositionally biased toward polar residues; sequence TGKALSSNGHDNTNGVNGSSAATVNGNRKQTVEQSNQNSTTNPN. The segment at 126–174 is disordered; sequence TGKALSSNGHDNTNGVNGSSAATVNGNRKQTVEQSNQNSTTNPNELPKP. The USP domain maps to 199–509; the sequence is AGMLNVGNTC…NAYIMFYELD (311 aa). The active-site Nucleophile is the cysteine 208. The active-site Proton acceptor is histidine 468. Phosphoserine occurs at positions 552 and 554. Low complexity predominate over residues 642–658; sequence ANSNKSSCNNNTLTTNS. Disordered stretches follow at residues 642-804, 818-975, 1056-1122, and 1136-1185; these read ANSN…TDAI, HRAT…YQSE, APTL…GSFP, and NKFK…QQQS. A compositionally biased stretch (acidic residues) spans 670–683; that stretch reads SDEEDEDEDSDDDV. Threonine 716 is modified (phosphothreonine). Phosphoserine is present on residues serine 726 and serine 728. Composition is skewed to low complexity over residues 778–797 and 836–853; these read KSNGSGNESSTSTSIKSNNN and QQQQVTKKPSNSSSSLIS. Serine 867 is modified (phosphoserine). Threonine 870 is modified (phosphothreonine). Phosphoserine is present on serine 873. Residues 891-920 are compositionally biased toward acidic residues; that stretch reads DDNDDDDEDADEEDDADADAEQEEYDDEVV. 2 stretches are compositionally biased toward polar residues: residues 924–942 and 959–975; these read TTPSITTKNLNNPFASKPS and SAKSAQTPRVGNGYQSE. Residue threonine 925 is modified to Phosphothreonine. Basic and acidic residues predominate over residues 1062-1071; that stretch reads EAREQRKRDA. 2 stretches are compositionally biased toward low complexity: residues 1151 to 1161 and 1172 to 1185; these read QQQRALQRHLA and QSTGHQQQQQQQQS.

Belongs to the peptidase C19 family. Interacts with atms/PAF1, but not with CycT.

The protein localises to the nucleus. It is found in the nucleolus. The enzyme catalyses Thiol-dependent hydrolysis of ester, thioester, amide, peptide and isopeptide bonds formed by the C-terminal Gly of ubiquitin (a 76-residue protein attached to proteins as an intracellular targeting signal).. Required for maintaining multiple types of adult stem cells, including male and female germline, epithelial follicle cell and intestinal stem cells. May function as a transcriptional repressor by continually deubiquiting histone H2B at the promoters of genes critical for cellular differentiation, thereby preventing histone H3 'Lys-4' trimethylation (H3K4). Controls selective autophagy activation by ubiquitinated proteins. This Drosophila mojavensis (Fruit fly) protein is Ubiquitin carboxyl-terminal hydrolase 36 (Usp36).